We begin with the raw amino-acid sequence, 156 residues long: Cyanate hydratase (156 aa).

Residues R96, E99, and S122 contribute to the active site.

It belongs to the cyanase family.

The catalysed reaction is cyanate + hydrogencarbonate + 3 H(+) = NH4(+) + 2 CO2. Catalyzes the reaction of cyanate with bicarbonate to produce ammonia and carbon dioxide. The sequence is that of Cyanate hydratase from Burkholderia lata (strain ATCC 17760 / DSM 23089 / LMG 22485 / NCIMB 9086 / R18194 / 383).